The sequence spans 407 residues: Serine/threonine-protein kinase GRIK2 (407 aa).

Residues serine 21–serine 64 form a disordered region. Residues proline 31–aspartate 40 are compositionally biased toward basic and acidic residues. A Protein kinase domain is found at tyrosine 107–valine 370. ATP contacts are provided by residues isoleucine 113–valine 121 and lysine 136. Threonine 153 is subject to Phosphothreonine; by autocatalysis. Aspartate 238 acts as the Proton acceptor in catalysis. Position 260 is a phosphoserine; by KIN10 (serine 260).

The protein belongs to the protein kinase superfamily. Ser/Thr protein kinase family. As to quaternary structure, associates with the SNF1-related protein kinase (SnRK) complex. Interacts with AL1, a geminivirus (TGMV) protein essential for viral replication. In terms of tissue distribution, expressed in shoot apical meristem, leaf primordium and emerging petiole (at protein level).

It catalyses the reaction L-seryl-[protein] + ATP = O-phospho-L-seryl-[protein] + ADP + H(+). It carries out the reaction L-threonyl-[protein] + ATP = O-phospho-L-threonyl-[protein] + ADP + H(+). With respect to regulation, activated when autophosphorylated at Thr-153 and inactivated when phosphorylated at Ser-260 by SnRK1.1/KIN10. Activates SnRK1.1/KIN10 and SnRK1.2/KIN11 by phosphorylation of their activation-loop 'Thr-198' and 'Thr-176', respectively. Required for the regulation by SnRK1 kinases of the transcription of a large set of genes, the modification the activity of metabolic enzymes, and the control of various nutrient-responsive cellular developmental processes. This chain is Serine/threonine-protein kinase GRIK2 (GRIK2), found in Arabidopsis thaliana (Mouse-ear cress).